A 291-amino-acid polypeptide reads, in one-letter code: Acetyl-coenzyme A carboxylase carboxyl transferase subunit beta (291 aa).

Residues M1–S23 are disordered. In terms of domain architecture, CoA carboxyltransferase N-terminal spans L28–A291. The Zn(2+) site is built by C32, C35, C51, and C54. The C4-type zinc-finger motif lies at C32–C54.

The protein belongs to the AccD/PCCB family. In terms of assembly, acetyl-CoA carboxylase is a heterohexamer composed of biotin carboxyl carrier protein (AccB), biotin carboxylase (AccC) and two subunits each of ACCase subunit alpha (AccA) and ACCase subunit beta (AccD). It depends on Zn(2+) as a cofactor.

The protein resides in the cytoplasm. It catalyses the reaction N(6)-carboxybiotinyl-L-lysyl-[protein] + acetyl-CoA = N(6)-biotinyl-L-lysyl-[protein] + malonyl-CoA. It functions in the pathway lipid metabolism; malonyl-CoA biosynthesis; malonyl-CoA from acetyl-CoA: step 1/1. Component of the acetyl coenzyme A carboxylase (ACC) complex. Biotin carboxylase (BC) catalyzes the carboxylation of biotin on its carrier protein (BCCP) and then the CO(2) group is transferred by the transcarboxylase to acetyl-CoA to form malonyl-CoA. The polypeptide is Acetyl-coenzyme A carboxylase carboxyl transferase subunit beta (Stenotrophomonas maltophilia (strain R551-3)).